Reading from the N-terminus, the 88-residue chain is Small ribosomal subunit protein bS20 (88 aa).

The protein belongs to the bacterial ribosomal protein bS20 family.

Functionally, binds directly to 16S ribosomal RNA. The protein is Small ribosomal subunit protein bS20 of Clostridioides difficile (strain 630) (Peptoclostridium difficile).